A 247-amino-acid chain; its full sequence is uncharacterized protein (247 aa).

Residues 1-35 (MWGPGVTAEGLSVAPAPPPLLPLLLLLALALVAPS) form the signal peptide. A helical membrane pass occupies residues 82–102 (LSGLLILLVLFAIGYFLQRII). The interval 109–176 (YPRGQARPGQ…RGSGGRLPPS (68 aa)) is disordered. Low complexity predominate over residues 111–120 (RGQARPGQAR). Gly residues predominate over residues 161–171 (SGGGRGRGSGG).

The protein resides in the membrane. This is an uncharacterized protein from Mus musculus (Mouse).